Here is a 321-residue protein sequence, read N- to C-terminus: Sex-lethal homolog (321 aa).

RRM domains are found at residues 78 to 156 (TNLI…FARP) and 164 to 244 (TNLY…VAEE).

In terms of tissue distribution, expressed in gonads and somatic tissues of both sexes. In the ovary, expressed in the last egg chamber of each ovariole. Highly expressed in nurse cells with low expression found in oocytes. Highly expressed in testis with lower expression in testis sheath and vas deferentia.

It is found in the nucleus. In terms of biological role, unknown; apparently not involved in somatic sex determination. The polypeptide is Sex-lethal homolog (SXL) (Megaselia scalaris (Humpbacked fly)).